The sequence spans 318 residues: Ribose-phosphate pyrophosphokinase 1 (318 aa).

An ATP-binding site is contributed by 96-101; that stretch reads RQDKKD. Mg(2+) is bound by residues Asp-128, His-130, Asp-139, and Asp-143. Residue His-130 participates in ATP binding. Residues 212–227 are binding of phosphoribosylpyrophosphate; that stretch reads KDRVAILVDDMADTCG.

It belongs to the ribose-phosphate pyrophosphokinase family. In terms of assembly, homodimer. The active form is probably a hexamer composed of 3 homodimers. It depends on Mg(2+) as a cofactor.

The catalysed reaction is D-ribose 5-phosphate + ATP = 5-phospho-alpha-D-ribose 1-diphosphate + AMP + H(+). It participates in metabolic intermediate biosynthesis; 5-phospho-alpha-D-ribose 1-diphosphate biosynthesis; 5-phospho-alpha-D-ribose 1-diphosphate from D-ribose 5-phosphate (route I): step 1/1. With respect to regulation, activated by magnesium and inorganic phosphate. Catalyzes the synthesis of phosphoribosylpyrophosphate (PRPP) that is essential for nucleotide synthesis. The protein is Ribose-phosphate pyrophosphokinase 1 (PRPS1) of Macaca fascicularis (Crab-eating macaque).